We begin with the raw amino-acid sequence, 258 residues long: Oxidoreductase fscI (258 aa).

The NADP(+) site is built by Leu-34, Arg-59, Asp-82, Asn-109, and Lys-141. Ser-163 (proton donor) is an active-site residue. Position 193 (Arg-193) interacts with NADP(+).

The protein belongs to the short-chain dehydrogenases/reductases (SDR) family.

The protein operates within secondary metabolite biosynthesis. Functionally, oxidoreductase; part of the fragmented gene cluster that mediates the biosynthesis of fusarochromene, a tryptophan-derived metabolite closely related to a group of mycotoxins including fusarochromanone. Within the pathway, fscI catalyzes the formation of the chromene ring from the prenyl moity added by the prenyltransferase fscG. The first step of the pathway is the epimerization of L-tryptophan to D-tryptophan in the presence of the NRPS-like tryptophan epimerase fscC. D-tryptophan is subsequently hydroxylated by the tryptophan 6-hydroxylase fscE to yield 6-hydroxytryptophan. The pyrrole ring undergoes cleavaged by the tryptophan 2,3-dioxygenase fscD and is finally converted to 4-hydroxykyrunenine by the hydrolase fscH. The NRPS-like oxidoreductase fscA reduces the carboxyl group to primary alcohol and the DMATS-type prenyltransferase fscG performs prenylation, followed by the formation of a chromene ring catalyzed by the oxidoreductase fscI, which leads to desacetylfusarochromene. Epoxidation by fscF and rearrangement reactions of chromene double bonds convert compound desacetylfusarochromene to fusarochromanones. Although specific acetyltransferases were not found near the fsc gene cluster, several predicted enzymes containing the N-acetyltransferase superfamily domain are present in the genome of F.equiseti. These predicted enzymes may have the potential to convert desacetylfusarochromene to fusarochromene. In Fusarium equiseti (Fusarium scirpi), this protein is Oxidoreductase fscI.